Reading from the N-terminus, the 353-residue chain is Photosystem II D2 protein (353 aa).

T2 is subject to N-acetylthreonine. The residue at position 2 (T2) is a Phosphothreonine. A helical membrane pass occupies residues 41–61 (CAYFALGGWFTGTTFVTSWYT). H118 contributes to the chlorophyll a binding site. A helical membrane pass occupies residues 125-141 (GFMLRQFELARSVQLRP). Pheophytin a is bound by residues Q130 and N143. A helical transmembrane segment spans residues 153–166 (VFVSVFLIYPLGQS). H198 serves as a coordination point for chlorophyll a. The helical transmembrane segment at 208 to 228 (AALLCAIHGATVENTLFEDGD) threads the bilayer. A plastoquinone-binding residues include H215 and F262. Residue H215 participates in Fe cation binding. Residue H269 coordinates Fe cation. The helical transmembrane segment at 279-295 (GLWMSAIGVVGLALNLR) threads the bilayer.

The protein belongs to the reaction center PufL/M/PsbA/D family. PSII is composed of 1 copy each of membrane proteins PsbA, PsbB, PsbC, PsbD, PsbE, PsbF, PsbH, PsbI, PsbJ, PsbK, PsbL, PsbM, PsbT, PsbX, PsbY, PsbZ, Psb30/Ycf12, at least 3 peripheral proteins of the oxygen-evolving complex and a large number of cofactors. It forms dimeric complexes. The D1/D2 heterodimer binds P680, chlorophylls that are the primary electron donor of PSII, and subsequent electron acceptors. It shares a non-heme iron and each subunit binds pheophytin, quinone, additional chlorophylls, carotenoids and lipids. There is also a Cl(-1) ion associated with D1 and D2, which is required for oxygen evolution. The PSII complex binds additional chlorophylls, carotenoids and specific lipids. serves as cofactor.

Its subcellular location is the plastid. It localises to the chloroplast thylakoid membrane. It catalyses the reaction 2 a plastoquinone + 4 hnu + 2 H2O = 2 a plastoquinol + O2. In terms of biological role, photosystem II (PSII) is a light-driven water:plastoquinone oxidoreductase that uses light energy to abstract electrons from H(2)O, generating O(2) and a proton gradient subsequently used for ATP formation. It consists of a core antenna complex that captures photons, and an electron transfer chain that converts photonic excitation into a charge separation. The D1/D2 (PsbA/PsbD) reaction center heterodimer binds P680, the primary electron donor of PSII as well as several subsequent electron acceptors. D2 is needed for assembly of a stable PSII complex. The chain is Photosystem II D2 protein from Drimys granadensis.